The primary structure comprises 397 residues: MAKAKFERTKPHVNIGTIGHIDHGKTTLTAAITKVLHDQNPDINPYTPFEQIDKAPEERARGITISIAHVEYQTEKRHYAHVDCPGHADYIKNMITGAAQMDGAILVVSAADGPMPQTKEHVLLARQVGVPYIVVALNKADVVDDEEILQLVELEVRELLNSYEFPGDDVPVVRVSALKALEGDPKWTQSILDLLKACDDYIPEPVREIDKPFLMPIEDVFTITGRGTVVTGRVERGVVKVGDEVEIVGIHPKTLKTTVTGVEMFRKLLDEGRAGDNIGVLLRGIKREEVERGQVVCKPGSITPHTEFEAQVYVLSKDEGGRHTPFFNNYRPQFYFRTTDVTGVVHLPEGTEMVMPGDNTEMRVELIQPIAMEEGLRFAIREGGRTVGAGRVTKILK.

Positions 10 to 206 (KPHVNIGTIG…ACDDYIPEPV (197 aa)) constitute a tr-type G domain. The segment at 19–26 (GHIDHGKT) is G1. 19-26 (GHIDHGKT) is a GTP binding site. Threonine 26 is a binding site for Mg(2+). The G2 stretch occupies residues 62 to 66 (GITIS). The interval 83 to 86 (DCPG) is G3. GTP is bound by residues 83–87 (DCPGH) and 138–141 (NKAD). Residues 138-141 (NKAD) form a G4 region. The G5 stretch occupies residues 176–178 (SAL).

Belongs to the TRAFAC class translation factor GTPase superfamily. Classic translation factor GTPase family. EF-Tu/EF-1A subfamily. As to quaternary structure, monomer.

The protein localises to the cytoplasm. The catalysed reaction is GTP + H2O = GDP + phosphate + H(+). Functionally, GTP hydrolase that promotes the GTP-dependent binding of aminoacyl-tRNA to the A-site of ribosomes during protein biosynthesis. The polypeptide is Elongation factor Tu (Acidothermus cellulolyticus (strain ATCC 43068 / DSM 8971 / 11B)).